A 137-amino-acid chain; its full sequence is Putative nickel-responsive regulator (137 aa).

His79, His90, His92, and Cys98 together coordinate Ni(2+).

This sequence belongs to the transcriptional regulatory CopG/NikR family. The cofactor is Ni(2+).

Functionally, transcriptional regulator. The chain is Putative nickel-responsive regulator from Campylobacter concisus (strain 13826).